Here is a 407-residue protein sequence, read N- to C-terminus: Arginine deiminase (407 aa).

Cys-397 serves as the catalytic Amidino-cysteine intermediate.

It belongs to the arginine deiminase family.

The protein localises to the cytoplasm. The catalysed reaction is L-arginine + H2O = L-citrulline + NH4(+). It functions in the pathway amino-acid degradation; L-arginine degradation via ADI pathway; carbamoyl phosphate from L-arginine: step 1/2. This is Arginine deiminase from Escherichia coli O81 (strain ED1a).